Here is a 1000-residue protein sequence, read N- to C-terminus: Probable coatomer subunit beta' (1000 aa).

WD repeat units follow at residues 13–52 (ARSD…LVKS), 55–94 (VCDV…RVHQ), 97–136 (AHSD…AMKQ), 140–180 (GHTH…PNFT), 183–224 (GHEK…CVQT), 227–266 (GHAQ…LETT), and 351–391 (LGSS…NKDF). The interval 863 to 1000 (PRQTETQLKA…MDDLNLDEED (138 aa)) is disordered. The span at 901 to 915 (EPEEEEEQEEFDDDQ) shows a compositional bias: acidic residues. A compositionally biased stretch (low complexity) spans 960 to 969 (SASSQQSAQD). Acidic residues predominate over residues 970 to 1000 (FQDDTQWSDEDFGDAENGDLNMDDLNLDEED).

Belongs to the WD repeat COPB2 family. Oligomeric complex that consists of at least the alpha, beta, beta', gamma, delta, epsilon and zeta subunits.

The protein resides in the cytoplasm. It is found in the golgi apparatus membrane. Its subcellular location is the cytoplasmic vesicle. The protein localises to the COPI-coated vesicle membrane. The coatomer is a cytosolic protein complex that binds to dilysine motifs and reversibly associates with Golgi non-clathrin-coated vesicles, which further mediate biosynthetic protein transport from the ER, via the Golgi up to the trans Golgi network. Coatomer complex is required for budding from Golgi membranes, and is essential for the retrograde Golgi-to-ER transport of dilysine-tagged proteins. This chain is Probable coatomer subunit beta' (copb-2), found in Caenorhabditis elegans.